Reading from the N-terminus, the 193-residue chain is Adenylate kinase (193 aa).

Residue 11-16 coordinates ATP; that stretch reads GAGKGT. The NMP stretch occupies residues 31–60; that stretch reads STGDLLRAEVKAQTPLGCQAKVYMDAGELV. Residues T32, R37, 58–60, 85–88, and Q92 contribute to the AMP site; these read ELV and GFPR. The interval 126–136 is LID; it reads ARGKEQGRSDD. An ATP-binding site is contributed by R127. AMP contacts are provided by R133 and R145. Q173 serves as a coordination point for ATP.

Belongs to the adenylate kinase family. Monomer.

It is found in the cytoplasm. The catalysed reaction is AMP + ATP = 2 ADP. It functions in the pathway purine metabolism; AMP biosynthesis via salvage pathway; AMP from ADP: step 1/1. Its function is as follows. Catalyzes the reversible transfer of the terminal phosphate group between ATP and AMP. Plays an important role in cellular energy homeostasis and in adenine nucleotide metabolism. The protein is Adenylate kinase of Synechococcus sp. (strain JA-2-3B'a(2-13)) (Cyanobacteria bacterium Yellowstone B-Prime).